The following is a 310-amino-acid chain: Aspartate carbamoyltransferase catalytic subunit (310 aa).

2 residues coordinate carbamoyl phosphate: R57 and T58. K86 provides a ligand contact to L-aspartate. Carbamoyl phosphate-binding residues include R107, H135, and Q138. L-aspartate contacts are provided by R168 and R229. Positions 268 and 269 each coordinate carbamoyl phosphate.

Belongs to the aspartate/ornithine carbamoyltransferase superfamily. ATCase family. Heterooligomer of catalytic and regulatory chains.

The catalysed reaction is carbamoyl phosphate + L-aspartate = N-carbamoyl-L-aspartate + phosphate + H(+). The protein operates within pyrimidine metabolism; UMP biosynthesis via de novo pathway; (S)-dihydroorotate from bicarbonate: step 2/3. Functionally, catalyzes the condensation of carbamoyl phosphate and aspartate to form carbamoyl aspartate and inorganic phosphate, the committed step in the de novo pyrimidine nucleotide biosynthesis pathway. This is Aspartate carbamoyltransferase catalytic subunit from Thermococcus onnurineus (strain NA1).